A 274-amino-acid polypeptide reads, in one-letter code: Hydroxyethylthiazole kinase (274 aa).

Residue Met-49 participates in substrate binding. Residues Arg-125 and Thr-173 each coordinate ATP. Position 200 (Gly-200) interacts with substrate.

It belongs to the Thz kinase family. Requires Mg(2+) as cofactor.

The catalysed reaction is 5-(2-hydroxyethyl)-4-methylthiazole + ATP = 4-methyl-5-(2-phosphooxyethyl)-thiazole + ADP + H(+). It participates in cofactor biosynthesis; thiamine diphosphate biosynthesis; 4-methyl-5-(2-phosphoethyl)-thiazole from 5-(2-hydroxyethyl)-4-methylthiazole: step 1/1. Its function is as follows. Catalyzes the phosphorylation of the hydroxyl group of 4-methyl-5-beta-hydroxyethylthiazole (THZ). This is Hydroxyethylthiazole kinase from Desulfosudis oleivorans (strain DSM 6200 / JCM 39069 / Hxd3) (Desulfococcus oleovorans).